The primary structure comprises 279 residues: MTIPRIPRQLYGIIGYPLGHSMSPLLHNWGFELLGEQAAYMAFPVAPEKLAEFICCARMLPVSGLSVTIPHKQAVMPLLDAVTPRAQAAGAVNTLFYDDGKLTGDNTDVYGFLHPLDSCGTAHAAALVLGAGGAANAVLAALTARGMCNVTVTNRNGDRARILAERFGVRCVAWEERHAVDADLVVNTTPLGMAGDRQAQTPLDPAFFSSRPAGLAYDLIYNPAQTFFLASAQAAGWRVLNGLDMFVAQGAEQFRIWRGRELPFAQARALIADALASGC.

Shikimate is bound by residues 21-23 (SMS) and threonine 68. Lysine 72 acts as the Proton acceptor in catalysis. The shikimate site is built by asparagine 93 and aspartate 108. NADP(+) is bound by residues 130–134 (GAGGA) and leucine 219. Shikimate is bound at residue tyrosine 221. Glycine 242 is a binding site for NADP(+).

This sequence belongs to the shikimate dehydrogenase family. As to quaternary structure, homodimer.

It catalyses the reaction shikimate + NADP(+) = 3-dehydroshikimate + NADPH + H(+). The protein operates within metabolic intermediate biosynthesis; chorismate biosynthesis; chorismate from D-erythrose 4-phosphate and phosphoenolpyruvate: step 4/7. Its function is as follows. Involved in the biosynthesis of the chorismate, which leads to the biosynthesis of aromatic amino acids. Catalyzes the reversible NADPH linked reduction of 3-dehydroshikimate (DHSA) to yield shikimate (SA). This Oleidesulfovibrio alaskensis (strain ATCC BAA-1058 / DSM 17464 / G20) (Desulfovibrio alaskensis) protein is Shikimate dehydrogenase (NADP(+)).